Reading from the N-terminus, the 223-residue chain is Serine/threonine/tyrosine-interacting protein B (223 aa).

The Tyrosine-protein phosphatase domain occupies 28–176 (EMQEILPGLF…LQEYEAIYLA (149 aa)).

It belongs to the protein-tyrosine phosphatase family. Non-receptor class subfamily.

Catalytically inactive phosphatase. This is Serine/threonine/tyrosine-interacting protein B (styx-b) from Xenopus laevis (African clawed frog).